Consider the following 359-residue polypeptide: tRNA-specific 2-thiouridylase MnmA (359 aa).

Residues 7–14 (GLSGGVDS) and leucine 33 contribute to the ATP site. The Nucleophile role is filled by cysteine 94. A disulfide bond links cysteine 94 and cysteine 193. Glycine 119 serves as a coordination point for ATP. Residues 143–145 (KDQ) are interaction with tRNA. The active-site Cysteine persulfide intermediate is cysteine 193. The interaction with tRNA stretch occupies residues 298–299 (RY).

It belongs to the MnmA/TRMU family.

The protein resides in the cytoplasm. The catalysed reaction is S-sulfanyl-L-cysteinyl-[protein] + uridine(34) in tRNA + AH2 + ATP = 2-thiouridine(34) in tRNA + L-cysteinyl-[protein] + A + AMP + diphosphate + H(+). Catalyzes the 2-thiolation of uridine at the wobble position (U34) of tRNA, leading to the formation of s(2)U34. This is tRNA-specific 2-thiouridylase MnmA from Trichodesmium erythraeum (strain IMS101).